We begin with the raw amino-acid sequence, 197 residues long: Nucleoid occlusion factor SlmA (197 aa).

The region spanning 7-67 (INRREHILQC…GLIEFIEDAI (61 aa)) is the HTH tetR-type domain. Residues 30–49 (TTAKLAAEVGVSEAALYRHF) constitute a DNA-binding region (H-T-H motif). Residues 110-130 (ALLGENERLRSRIDVLFAKIE) adopt a coiled-coil conformation.

It belongs to the nucleoid occlusion factor SlmA family. In terms of assembly, homodimer. Interacts with FtsZ.

It localises to the cytoplasm. It is found in the nucleoid. Functionally, required for nucleoid occlusion (NO) phenomenon, which prevents Z-ring formation and cell division over the nucleoid. Acts as a DNA-associated cell division inhibitor that binds simultaneously chromosomal DNA and FtsZ, and disrupts the assembly of FtsZ polymers. SlmA-DNA-binding sequences (SBS) are dispersed on non-Ter regions of the chromosome, preventing FtsZ polymerization at these regions. The chain is Nucleoid occlusion factor SlmA from Shewanella frigidimarina (strain NCIMB 400).